A 124-amino-acid chain; its full sequence is Darcynin homolog (124 aa).

It belongs to the darcynin family.

This chain is Darcynin homolog, found in Granulibacter bethesdensis (strain ATCC BAA-1260 / CGDNIH1).